Consider the following 807-residue polypeptide: Glycerol-3-phosphate acyltransferase (807 aa).

The short motif at 308–313 (CHRSHM) is the HXXXXD motif element.

Belongs to the GPAT/DAPAT family.

It localises to the cell inner membrane. The enzyme catalyses sn-glycerol 3-phosphate + an acyl-CoA = a 1-acyl-sn-glycero-3-phosphate + CoA. Its pathway is phospholipid metabolism; CDP-diacylglycerol biosynthesis; CDP-diacylglycerol from sn-glycerol 3-phosphate: step 1/3. The sequence is that of Glycerol-3-phosphate acyltransferase from Shewanella sp. (strain W3-18-1).